The primary structure comprises 269 residues: MHPMLNIAIRAIRKGGNIIVQNYDTQKFIKEDLDKKKIFIKNIMYKTYRIISEVIYKSYPNHIILNKNTDLIKNEKNTLWIINELDGKNNFIKNFPHFCISIAVIMKNNTEISVIYDPIRNDLFTAVKGQGSQLNGYRIRCNNINSLNYSTIAINLPLKHYAKSLFYLKIYKKLILSGISLRCTGSTLLDLAYVASGRIDCLFDFNPQSINLIAGKLQAREAGCLTSKFTENSEKKSEKGNFCTSNLTSSSKFMRLITEKISQCYSFNN.

Substrate is bound at residue 85–88; it reads LDGK.

The protein belongs to the inositol monophosphatase superfamily. In terms of assembly, homodimer. The rRNA transcription and antitermination complex (rrnTAC) consists of RNA polymerase (RNAP), NusA, NusB, NusE (rpsJ), NusG, SubB, ribosomal protein S4, DNA and precursor rRNA; S4 is more flexible than other subunits. Requires Mg(2+) as cofactor.

The protein localises to the cytoplasm. It catalyses the reaction a myo-inositol phosphate + H2O = myo-inositol + phosphate. Its function is as follows. Part of the processive rRNA transcription and antitermination complex (rrnTAC). The complex forms an RNA-chaperone ring around the RNA exit tunnel of RNA polymerase (RNAP). It supports rapid transcription and antitermination of rRNA operons, cotranscriptional rRNA folding, and annealing of distal rRNA regions to allow correct ribosome biogenesis. This subunit may play a central role in organizing the structure. The sequence is that of Nus factor SuhB (suhB) from Buchnera aphidicola subsp. Schizaphis graminum (strain Sg).